Consider the following 275-residue polypeptide: Light-independent protochlorophyllide reductase iron-sulfur ATP-binding protein (275 aa).

ATP-binding positions include 12–17 and lysine 41; that span reads GIGKST. Serine 16 lines the Mg(2+) pocket. [4Fe-4S] cluster-binding residues include cysteine 97 and cysteine 131. ATP is bound at residue 182 to 183; that stretch reads NR.

It belongs to the NifH/BchL/ChlL family. As to quaternary structure, homodimer. Protochlorophyllide reductase is composed of three subunits; BchL, BchN and BchB. The cofactor is [4Fe-4S] cluster.

The enzyme catalyses chlorophyllide a + oxidized 2[4Fe-4S]-[ferredoxin] + 2 ADP + 2 phosphate = protochlorophyllide a + reduced 2[4Fe-4S]-[ferredoxin] + 2 ATP + 2 H2O. It participates in porphyrin-containing compound metabolism; bacteriochlorophyll biosynthesis (light-independent). Component of the dark-operative protochlorophyllide reductase (DPOR) that uses Mg-ATP and reduced ferredoxin to reduce ring D of protochlorophyllide (Pchlide) to form chlorophyllide a (Chlide). This reaction is light-independent. The L component serves as a unique electron donor to the NB-component of the complex, and binds Mg-ATP. The protein is Light-independent protochlorophyllide reductase iron-sulfur ATP-binding protein of Chlorobium phaeobacteroides (strain DSM 266 / SMG 266 / 2430).